Consider the following 128-residue polypeptide: Cytochrome c oxidase subunit 5B, mitochondrial (128 aa).

Residues 1-30 constitute a mitochondrion transit peptide; sequence MASRLLRGVGALAAQALRRTARGAAVTRSM. Lys-67 and Lys-85 each carry N6-acetyllysine. Zn(2+)-binding residues include Cys-90, Cys-92, Cys-112, and Cys-115. At Lys-120 the chain carries N6-acetyllysine.

The protein belongs to the cytochrome c oxidase subunit 5B family. In terms of assembly, component of the cytochrome c oxidase (complex IV, CIV), a multisubunit enzyme composed of 14 subunits. The complex is composed of a catalytic core of 3 subunits MT-CO1, MT-CO2 and MT-CO3, encoded in the mitochondrial DNA, and 11 supernumerary subunits COX4I, COX5A, COX5B, COX6A, COX6B, COX6C, COX7A, COX7B, COX7C, COX8 and NDUFA4, which are encoded in the nuclear genome. The complex exists as a monomer or a dimer and forms supercomplexes (SCs) in the inner mitochondrial membrane with NADH-ubiquinone oxidoreductase (complex I, CI) and ubiquinol-cytochrome c oxidoreductase (cytochrome b-c1 complex, complex III, CIII), resulting in different assemblies (supercomplex SCI(1)III(2)IV(1) and megacomplex MCI(2)III(2)IV(2)).

It localises to the mitochondrion inner membrane. It functions in the pathway energy metabolism; oxidative phosphorylation. Component of the cytochrome c oxidase, the last enzyme in the mitochondrial electron transport chain which drives oxidative phosphorylation. The respiratory chain contains 3 multisubunit complexes succinate dehydrogenase (complex II, CII), ubiquinol-cytochrome c oxidoreductase (cytochrome b-c1 complex, complex III, CIII) and cytochrome c oxidase (complex IV, CIV), that cooperate to transfer electrons derived from NADH and succinate to molecular oxygen, creating an electrochemical gradient over the inner membrane that drives transmembrane transport and the ATP synthase. Cytochrome c oxidase is the component of the respiratory chain that catalyzes the reduction of oxygen to water. Electrons originating from reduced cytochrome c in the intermembrane space (IMS) are transferred via the dinuclear copper A center (CU(A)) of subunit 2 and heme A of subunit 1 to the active site in subunit 1, a binuclear center (BNC) formed by heme A3 and copper B (CU(B)). The BNC reduces molecular oxygen to 2 water molecules using 4 electrons from cytochrome c in the IMS and 4 protons from the mitochondrial matrix. In Mus musculus (Mouse), this protein is Cytochrome c oxidase subunit 5B, mitochondrial (Cox5b).